Here is a 578-residue protein sequence, read N- to C-terminus: NADPH oxidase 4 (578 aa).

The Cytoplasmic portion of the chain corresponds to 1 to 16 (MALSWRSWLANEGVKH). Residues 17–37 (LCLLVWLSLNVLLFWKTFLLY) traverse the membrane as a helical segment. Residues 38-62 (NQGPEYYYIHQMLGLGLCLSRASAS) lie on the Extracellular side of the membrane. The Ferric oxidoreductase domain occupies 58-303 (RASASVLNLN…YCAERLYRCI (246 aa)). Residues 63–83 (VLNLNCSLILLPMCRTVLAYL) form a helical membrane-spanning segment. Residues 84-104 (RGSQKVPSRRTRRLLDKSKTL) lie on the Cytoplasmic side of the membrane. A helical membrane pass occupies residues 105-125 (HITCGITICIFSGVHVAAHLV). The Extracellular portion of the chain corresponds to 126-154 (NALNFSVNYSEHFLALNAARYQNEDPRKL). N-linked (GlcNAc...) asparagine glycosylation is present at Asn-133. A helical transmembrane segment spans residues 155-175 (LFTTVPGLTGVCMVVVLFLMV). The Cytoplasmic portion of the chain corresponds to 176 to 188 (TASTYAIRVSNYD). The chain crosses the membrane as a helical span at residues 189–209 (IFWYTHNLFFVFYMLLLLHVS). The Extracellular portion of the chain corresponds to 210 to 424 (GGLLKYQTNL…SPFEESLNYE (215 aa)). The E-loop; essential for H2O2 generating catalytic activity stretch occupies residues 218-273 (NLDTHPPGCISLNRTPSQNMSIADYVSEHFHGSLPGGFSKLEDHYQKTLVKICLEE). Residues 248-575 (HGSLPGGFSK…YGTKFEYNKE (328 aa)) form a mediates interaction with TLR4 region. The FAD-binding FR-type domain maps to 304–419 (RSNKPVTIIS…DGPFGSPFEE (116 aa)). The chain crosses the membrane as a helical span at residues 425–445 (VSLCVAGGIGVTPFASILNTL). At 446–578 (LDDWKPYKLR…KFEYNKESFS (133 aa)) the chain is on the cytoplasmic side.

As to quaternary structure, interacts with TLR4. Interacts with, relocalizes and stabilizes CYBA/p22phox. Interacts with protein disulfide isomerase. Interacts with PPP1R15A. Interacts with LRRC8A; this interaction prevents the ubiquitin-mediated degradation of LRRC8A. Heme serves as cofactor. N-glycosylation is required for the function. In terms of tissue distribution, expressed in vascular smooth muscle.

It is found in the cytoplasm. It localises to the endoplasmic reticulum membrane. The protein resides in the cell membrane. Its subcellular location is the cell junction. The protein localises to the focal adhesion. It is found in the nucleus. It catalyses the reaction NADPH + 2 O2 = 2 superoxide + NADP(+) + H(+). The catalysed reaction is NADPH + O2 + H(+) = H2O2 + NADP(+). Its activity is regulated as follows. Activated by insulin. Inhibited by diphenylene iodonium. Inhibited by plumbagin. Activated by phorbol 12-myristate 13-acetate (PMA). Functionally, NADPH oxidase that catalyzes predominantly the reduction of oxygen to H2O2. Can also catalyze to a smaller extent, the reduction of oxygen to superoxide. May function as an oxygen sensor regulating the KCNK3/TASK-1 potassium channel and HIF1A activity. May regulate insulin signaling cascade. May play a role in apoptosis, bone resorption and lipolysaccharide-mediated activation of NFKB. May produce superoxide in the nucleus and play a role in regulating gene expression upon cell stimulation. Promotes ferroptosis, reactive oxygen species production and reduced glutathione (GSH) levels by activating NLRP3 inflammasome activation and cytokine release. The polypeptide is NADPH oxidase 4 (Nox4) (Rattus norvegicus (Rat)).